The primary structure comprises 101 residues: Urease subunit beta (101 aa).

This sequence belongs to the urease beta subunit family. Heterotrimer of UreA (gamma), UreB (beta) and UreC (alpha) subunits. Three heterotrimers associate to form the active enzyme.

It localises to the cytoplasm. The catalysed reaction is urea + 2 H2O + H(+) = hydrogencarbonate + 2 NH4(+). The protein operates within nitrogen metabolism; urea degradation; CO(2) and NH(3) from urea (urease route): step 1/1. This Nostoc punctiforme (strain ATCC 29133 / PCC 73102) protein is Urease subunit beta.